The primary structure comprises 442 residues: Histidine--tRNA ligase (442 aa).

This sequence belongs to the class-II aminoacyl-tRNA synthetase family. Homodimer.

The protein localises to the cytoplasm. The enzyme catalyses tRNA(His) + L-histidine + ATP = L-histidyl-tRNA(His) + AMP + diphosphate + H(+). In Helicobacter acinonychis (strain Sheeba), this protein is Histidine--tRNA ligase.